The following is a 294-amino-acid chain: FAD-dependent monooxygenase SAT1 (294 aa).

Asp108 contributes to the FAD binding site.

The protein belongs to the paxM FAD-dependent monooxygenase family. It depends on FAD as a cofactor.

The protein operates within mycotoxin biosynthesis. In terms of biological role, FAD-dependent monooxygenase; part of the satratoxin SC1 cluster involved in the biosynthesis of satratoxins, trichothecene mycotoxins that are associated with human food poisonings. Satratoxins are suggested to be made by products of multiple gene clusters (SC1, SC2 and SC3) that encode 21 proteins in all, including polyketide synthases, acetyltransferases, and other enzymes expected to modify the trichothecene skeleton. SC1 encodes 10 proteins, SAT1 to SAT10. The largest are SAT8, which encodes a putative polyketide synthase (PKS) with a conventional non-reducing architecture, and SAT10, a putative protein containing four ankyrin repeats and thus may be involved in protein scaffolding. The putative short-chain reductase SAT3 may assist the PKS in some capacity. SAT6 contains a secretory lipase domain and acts probably as a trichothecene esterase. SAT5 encodes a putative acetyltransferase, and so, with SAT6, may affect endogenous protection from toxicity. The probable transcription factor SAT9 may regulate the expression of the SC1 cluster. SC2 encodes proteins SAT11 to SAT16, the largest of which encodes the putative reducing PKS SAT13. SAT11 is a cytochrome P450 monooxygenase, while SAT14 and SAT16 are probable acetyltransferases. The SC2 cluster may be regulated by the transcription factor SAT15. SC3 is a small cluster that encodes 5 proteins, SAT17 to SAT21. SAT21 is a putative MFS-type transporter which may have a role in exporting secondary metabolites. The four other proteins putatively encoded in SC3 include the taurine hydroxylase-like protein SAT17, the O-methyltransferase SAT18, the acetyltransferase SAT19, and the Cys6-type zinc finger SAT20, the latter being probably involved in regulation of SC3 expression. The polypeptide is FAD-dependent monooxygenase SAT1 (Stachybotrys chartarum (strain CBS 109288 / IBT 7711) (Toxic black mold)).